A 387-amino-acid chain; its full sequence is O-methyltransferase fsr2 (387 aa).

Aspartate 231 contacts S-adenosyl-L-methionine. Residue histidine 280 is the Proton acceptor of the active site.

It belongs to the class I-like SAM-binding methyltransferase superfamily. Cation-independent O-methyltransferase family. COMT subfamily.

It functions in the pathway polyketide biosynthesis. Its function is as follows. O-methyltransferase; part of the gene cluster that mediates the biosynthesis of fusarubins, highly pigmented naphthoquinones responsible for the coloration of the fruiting bodies. The non-reducing polyketide synthase FSR1 is responsible for the condensation of seven acetyl-CoA units to yield a haptaketide. After rings A and B are formed by aldol-type cyclization, the PKS-derived product is released as 6-O-demethylfusarubinaldehyde. Then, two hydroxyl groups at C-5 and C-10 are incorporated by FSR3, and simultaneously hydroxyl groups at C-6 and C-8 are methylated by FSR2. The aldehyde is, on the one hand, reduced by FSR3 to 8-O-methylfusarubin alcohol, which equilibrates mainly with 8-O-methylfusarubin and only small amounts of 8-O-methylnectriafurone. On the other hand, the aldehyde can be oxidized to form 8-O-methylfusarubinic acid, a reaction driven by FSR3 equilibrating with 8-O-methylfusarubinlactone, finally resulting in 8-O-methylanhydrofusarubinlactol after a further reduction step and loss of water. 8-O-Methylfusarubinic acid can also undergo decarboxylation, resulting in 8-O-methyl-13-hydroxynorjavanicin after another hydroxylation step at C-13. Both steps are most likely also accomplished by FSR3. No enzymatic function has been determined so far for either FSR4 and FSR5. Their deletion does not alter the product spectrum, but the possibility that they catalyze specific enzymatic steps during perithecium development cannot be ruled out. FSR4 might possess a regulatory function in the biosynthesis of fusarubins. The chain is O-methyltransferase fsr2 from Gibberella fujikuroi (strain CBS 195.34 / IMI 58289 / NRRL A-6831) (Bakanae and foot rot disease fungus).